An 87-amino-acid polypeptide reads, in one-letter code: Ragulator complex protein LAMTOR4 homolog (87 aa).

This sequence belongs to the LAMTOR4 family. Part of the Ragulator complex.

The protein resides in the lysosome. Its function is as follows. Regulator of the TOR pathway, a signaling cascade that promotes cell growth in response to growth factors, energy levels, and amino acids. As part of the Ragulator complex, may activate the TOR signaling cascade in response to amino acids. In Dictyostelium discoideum (Social amoeba), this protein is Ragulator complex protein LAMTOR4 homolog.